The following is a 375-amino-acid chain: F-box/kelch-repeat protein At4g39580 (375 aa).

The F-box domain occupies 20 to 66 (PTTNLFLPDDILLSSLSRISRLYYPTFSLVSKSFRSLIASPELYQTR). Kelch repeat units follow at residues 132–178 (NIYA…VLDG), 179–225 (KIYV…KSVG), and 229–269 (KYHL…VINN).

This chain is F-box/kelch-repeat protein At4g39580, found in Arabidopsis thaliana (Mouse-ear cress).